The chain runs to 465 residues: Ribulose bisphosphate carboxylase large chain (465 aa).

Lysine 4 carries the post-translational modification N6,N6,N6-trimethyllysine. Residues asparagine 113 and threonine 163 each coordinate substrate. Lysine 165 (proton acceptor) is an active-site residue. Residue lysine 167 participates in substrate binding. The Mg(2+) site is built by lysine 191, aspartate 193, and glutamate 194. Position 191 is an N6-carboxylysine (lysine 191). Residue histidine 284 is the Proton acceptor of the active site. Arginine 285, histidine 317, and serine 369 together coordinate substrate.

The protein belongs to the RuBisCO large chain family. Type I subfamily. In terms of assembly, heterohexadecamer of 8 large chains and 8 small chains; disulfide-linked. The disulfide link is formed within the large subunit homodimers. Requires Mg(2+) as cofactor. In terms of processing, the disulfide bond which can form in the large chain dimeric partners within the hexadecamer appears to be associated with oxidative stress and protein turnover.

The protein localises to the plastid. Its subcellular location is the chloroplast. It carries out the reaction 2 (2R)-3-phosphoglycerate + 2 H(+) = D-ribulose 1,5-bisphosphate + CO2 + H2O. The enzyme catalyses D-ribulose 1,5-bisphosphate + O2 = 2-phosphoglycolate + (2R)-3-phosphoglycerate + 2 H(+). Functionally, ruBisCO catalyzes two reactions: the carboxylation of D-ribulose 1,5-bisphosphate, the primary event in carbon dioxide fixation, as well as the oxidative fragmentation of the pentose substrate in the photorespiration process. Both reactions occur simultaneously and in competition at the same active site. In Ilex crenata (Japanese holly), this protein is Ribulose bisphosphate carboxylase large chain.